We begin with the raw amino-acid sequence, 397 residues long: Phosphoglycerate kinase (397 aa).

Substrate contacts are provided by residues 21–23, R37, 60–63, R120, and R153; these read DFN and HLGR. ATP-binding positions include K206, G296, E327, and 353 to 356; that span reads GGDS.

Belongs to the phosphoglycerate kinase family. As to quaternary structure, monomer.

Its subcellular location is the cytoplasm. The catalysed reaction is (2R)-3-phosphoglycerate + ATP = (2R)-3-phospho-glyceroyl phosphate + ADP. The protein operates within carbohydrate degradation; glycolysis; pyruvate from D-glyceraldehyde 3-phosphate: step 2/5. In Rhodopirellula baltica (strain DSM 10527 / NCIMB 13988 / SH1), this protein is Phosphoglycerate kinase.